We begin with the raw amino-acid sequence, 458 residues long: Transmembrane protein adipocyte-associated 1 homolog (458 aa).

Residues Asn-21 and Asn-45 are each glycosylated (N-linked (GlcNAc...) asparagine). Helical transmembrane passes span 81-101, 114-134, 152-172, 181-201, 225-245, 263-283, and 291-311; these read VILVPNILFLLFLILKCGSVI, AFTLLVYVSTLVNIIRCAYSM, IIIKFFYLTAEFCALTFGLLF, ILIALLGTLLVSIPHTAVQVI, FLFWVFSSAVLALVYFFIMCL, LIYCMMMVVLNVLQSMGAALI, and LCFVGVSTYVYFVLYPPIIYF. Asn-323 and Asn-324 each carry an N-linked (GlcNAc...) asparagine glycan. Residues 409–458 form a disordered region; that stretch reads RTGSDDYAHHRDSMLSEPSTGTTTRHLKGLGPQGSLVFEDDPSSLTSLRM. Positions 411 to 422 are enriched in basic and acidic residues; the sequence is GSDDYAHHRDSM.

Belongs to the UPF0359 family.

It localises to the membrane. This chain is Transmembrane protein adipocyte-associated 1 homolog (tpra-1), found in Caenorhabditis elegans.